The sequence spans 360 residues: sn-glycerol-3-phosphate import ATP-binding protein UgpC (360 aa).

In terms of domain architecture, ABC transporter spans 4 to 235 (LSLKGVKKSY…PATTFVASFI (232 aa)). Residue 37 to 44 (GPSGCGKS) coordinates ATP.

The protein belongs to the ABC transporter superfamily. sn-glycerol-3-phosphate importer (TC 3.A.1.1.3) family. As to quaternary structure, the complex is composed of two ATP-binding proteins (UgpC), two transmembrane proteins (UgpA and UgpE) and a solute-binding protein (UgpB).

The protein resides in the cell inner membrane. The catalysed reaction is sn-glycerol 3-phosphate(out) + ATP + H2O = sn-glycerol 3-phosphate(in) + ADP + phosphate + H(+). Its function is as follows. Part of the ABC transporter complex UgpBAEC involved in sn-glycerol-3-phosphate (G3P) import. Responsible for energy coupling to the transport system. The polypeptide is sn-glycerol-3-phosphate import ATP-binding protein UgpC (Burkholderia mallei (strain ATCC 23344)).